The chain runs to 1837 residues: AF4/FMR2 family member lilli (1837 aa).

Disordered regions lie at residues 1-25, 65-109, 162-295, 455-592, 605-712, 797-852, 868-1250, 1267-1311, and 1344-1466; these read MAQQQQQQQHHHHLQHQQQQQQQQQ, NLYS…PRRL, IQQQ…LHNG, QQLP…KKKY, TGLL…PGNV, PKSQ…LQIP, NNMQ…GGAK, QQQQ…GLAS, and APSS…DPML. Residues 16 to 25 are compositionally biased toward low complexity; that stretch reads HQQQQQQQQQ. Basic and acidic residues predominate over residues 84–109; that stretch reads REKYERQQGIQSDDRETSLFSEPRRL. 3 stretches are compositionally biased toward low complexity: residues 162-179, 187-200, and 247-264; these read IQQQVSSSISSSASVASS, QTQQQQQQQQQQQQ, and NSNSSSITNNAAASSSSS. Thr468 is subject to Phosphothreonine. The segment covering 475-488 has biased composition (basic and acidic residues); that stretch reads LKIEKNPILEKQDS. Over residues 490–500 the composition is skewed to acidic residues; it reads LENDLELSESE. Phosphoserine occurs at positions 497 and 499. 2 stretches are compositionally biased toward low complexity: residues 509 to 529 and 542 to 552; these read SPGSSSNGSESDSTESGSESS and QQQQQTQQQQL. Residues 553 to 563 are compositionally biased toward basic residues; sequence HGHHPQSHHHQ. The span at 564 to 583 shows a compositional bias: low complexity; it reads QFLQQQLQRQQQQQQQQQQL. Gly residues-rich tracts occupy residues 612-633 and 641-673; these read GGLGSSSGNNSSGGGGGSGNGG and GSMGGSGGSSSSGGASGGGGGGGGSGSSSGIGS. 2 stretches are compositionally biased toward polar residues: residues 678 to 690 and 698 to 711; these read NKTPSPTDSNKWN and PTSQTSSESVSPGN. The segment covering 815 to 837 has biased composition (low complexity); the sequence is SESATSGSSSSSCSSSDSAASAS. The segment covering 868–880 has biased composition (polar residues); the sequence is NNMQKSQSMSVTV. The span at 892 to 902 shows a compositional bias: basic residues; sequence PRQKKPRKKKM. Phosphoserine is present on residues Ser913 and Ser914. Low complexity-rich tracts occupy residues 927 to 951 and 961 to 1013; these read VVAQAQAAVVPPPSTNSTTTSATTT and QQQQ…SSVL. Residues 952 to 964 constitute a DNA-binding region (a.T hook); that stretch reads KKGRGRPRKQQQQ. Ser974 and Ser976 each carry phosphoserine. The span at 1021–1033 shows a compositional bias: polar residues; that stretch reads SQSSSNGNTPTKK. Low complexity-rich tracts occupy residues 1034 to 1049, 1056 to 1091, 1130 to 1139, and 1157 to 1173; these read MSSIPMMPAAAASAAA, AVAAANAVAASSSSSDEESSSSSCSTSKSSSSSSSS, GSSSPTSSSS, and ISNSNSNSNNNVIVNNN. Over residues 1174–1184 the composition is skewed to polar residues; sequence LQQQAMPQQSP. Residues 1189–1212 show a composition bias toward low complexity; the sequence is LSGGSQQLSSSDSSSSSSGSSSSS. Over residues 1217–1234 the composition is skewed to basic and acidic residues; the sequence is DAKREKNRERKPKSDKNK. Over residues 1267 to 1276 the composition is skewed to low complexity; it reads QQQQQQQQVQ. A compositionally biased stretch (polar residues) spans 1345–1355; it reads PSSSNQQNGHL. Residues 1373–1386 are compositionally biased toward basic residues; sequence KVKHEHHQLHHHSQ. Basic and acidic residues-rich tracts occupy residues 1393 to 1407 and 1416 to 1432; these read VKPEPELDSLYETKF and FQLKQERDRDRNRERDQ. Ser1517 is subject to Phosphoserine. Polar residues predominate over residues 1550–1560; sequence AVQTTPPTSVT. Disordered regions lie at residues 1550–1571 and 1727–1756; these read AVQTTPPTSVTGAGAPASLVSQ and GNTPSSISPSNSVGSQGSGSNTPPGKIVPQ. Residues 1727–1747 are compositionally biased toward low complexity; that stretch reads GNTPSSISPSNSVGSQGSGSN.

The protein belongs to the AF4 family.

Its subcellular location is the nucleus. Functionally, has a role in transcriptional regulation. Acts in parallel with the Ras/MAPK and the PI3K/PKB pathways in the control of cell identity and cellular growth. Essential for regulation of the cytoskeleton and cell growth but not for cell proliferation or growth rate. Required specifically for the microtubule-based basal transport of lipid droplets. Plays a partially redundant function downstream of Raf in cell fate specification in the developing eye. Pair-rule protein that regulates embryonic cellularization, gastrulation and segmentation. The polypeptide is AF4/FMR2 family member lilli (Drosophila willistoni (Fruit fly)).